The following is a 65-amino-acid chain: Ferredoxin-like protein in vnf region (65 aa).

2 4Fe-4S ferredoxin-type domains span residues 2–30 (AMAIDGYECTVCGDCEPVCPTGSIVFRDD) and 32–65 (YAIEADSCNECTDVGEPRCLGVCPVDLCIQPLDD). [4Fe-4S] cluster is bound by residues Cys10, Cys13, Cys16, Cys20, Cys39, Cys42, Cys50, and Cys54.

[4Fe-4S] cluster serves as cofactor.

The polypeptide is Ferredoxin-like protein in vnf region (Azotobacter vinelandii).